We begin with the raw amino-acid sequence, 356 residues long: Phosphoribosyl pyrophosphate synthase-associated protein 1 (356 aa).

At M1 the chain carries N-acetylmethionine. S177 and S215 each carry phosphoserine.

Belongs to the ribose-phosphate pyrophosphokinase family. In terms of assembly, binds to PRPS1 and PRPS2. In terms of tissue distribution, ubiquitous.

In terms of biological role, seems to play a negative regulatory role in 5-phosphoribose 1-diphosphate synthesis. This chain is Phosphoribosyl pyrophosphate synthase-associated protein 1 (Prpsap1), found in Rattus norvegicus (Rat).